The primary structure comprises 216 residues: Probable GTP-binding protein EngB (216 aa).

The 175-residue stretch at Glu23–Leu197 folds into the EngB-type G domain. Residues Gly31–Ser38, Gly58–Leu62, Asp76–Gly79, Thr143–Asp146, and Phe176–Ser178 contribute to the GTP site. Ser38 and Thr60 together coordinate Mg(2+).

Belongs to the TRAFAC class TrmE-Era-EngA-EngB-Septin-like GTPase superfamily. EngB GTPase family. It depends on Mg(2+) as a cofactor.

Its function is as follows. Necessary for normal cell division and for the maintenance of normal septation. The chain is Probable GTP-binding protein EngB from Aromatoleum aromaticum (strain DSM 19018 / LMG 30748 / EbN1) (Azoarcus sp. (strain EbN1)).